A 123-amino-acid polypeptide reads, in one-letter code: Small ribosomal subunit protein uS12 (123 aa).

A 3-methylthioaspartic acid modification is found at Asp-89.

This sequence belongs to the universal ribosomal protein uS12 family. Part of the 30S ribosomal subunit. Contacts proteins S8 and S17. May interact with IF1 in the 30S initiation complex.

With S4 and S5 plays an important role in translational accuracy. Functionally, interacts with and stabilizes bases of the 16S rRNA that are involved in tRNA selection in the A site and with the mRNA backbone. Located at the interface of the 30S and 50S subunits, it traverses the body of the 30S subunit contacting proteins on the other side and probably holding the rRNA structure together. The combined cluster of proteins S8, S12 and S17 appears to hold together the shoulder and platform of the 30S subunit. The polypeptide is Small ribosomal subunit protein uS12 (Methylobacterium sp. (strain 4-46)).